A 284-amino-acid polypeptide reads, in one-letter code: Nucleotide-binding protein Shal_3708 (284 aa).

Residue 8-15 (GRSGSGKS) coordinates ATP. A GTP-binding site is contributed by 56–59 (DIRN).

It belongs to the RapZ-like family.

Displays ATPase and GTPase activities. The sequence is that of Nucleotide-binding protein Shal_3708 from Shewanella halifaxensis (strain HAW-EB4).